We begin with the raw amino-acid sequence, 315 residues long: Methionyl-tRNA formyltransferase (315 aa).

(6S)-5,6,7,8-tetrahydrofolate is bound at residue Ser117–Pro120.

The protein belongs to the Fmt family.

The catalysed reaction is L-methionyl-tRNA(fMet) + (6R)-10-formyltetrahydrofolate = N-formyl-L-methionyl-tRNA(fMet) + (6S)-5,6,7,8-tetrahydrofolate + H(+). Functionally, attaches a formyl group to the free amino group of methionyl-tRNA(fMet). The formyl group appears to play a dual role in the initiator identity of N-formylmethionyl-tRNA by promoting its recognition by IF2 and preventing the misappropriation of this tRNA by the elongation apparatus. This is Methionyl-tRNA formyltransferase from Methylibium petroleiphilum (strain ATCC BAA-1232 / LMG 22953 / PM1).